Here is a 710-residue protein sequence, read N- to C-terminus: Protein phosphatase 1 regulatory subunit 37 (710 aa).

Over residues 1–12 the composition is skewed to pro residues; sequence MEIPPQEAPPGP. Residues 1–46 are disordered; the sequence is MEIPPQEAPPGPGADADADAEAEEAPAEAGSSSGASPPTDGRLKAA. The segment covering 16–26 has biased composition (acidic residues); that stretch reads ADADAEAEEAP. The segment covering 27-38 has biased composition (low complexity); that stretch reads AEAGSSSGASPP. Phosphoserine occurs at positions 54 and 60. 5 LRR repeats span residues 224–244, 252–273, 281–301, 310–330, and 338–358; these read SLAVLHLENASLSGRPLMLLA, NLQELYLADNKLNGLQDSAQLG, SLQILDLRNNHVLDSGLAYIC, GLVTLVLWNNQLTHTGMAFLG, and SLETLNLGHNPIGNEGVRNLK. A disordered region spans residues 487-677; sequence PLEESGDLPA…APPGLEAKGS (191 aa). Residues 512–531 show a composition bias toward acidic residues; sequence SDSDSDSDREEQEEEEEDQS. Positions 543–565 are enriched in low complexity; sequence SSSAPCPALLPSTDSLGPGDKSP. S581 is modified (phosphoserine). Positions 603–624 are enriched in pro residues; it reads PPVPPTSVSSPPPSPPSPPASP. Polar residues predominate over residues 637-649; it reads SEAQPQTEPSQAG. Residues 656-676 are compositionally biased toward low complexity; sequence LKPEFALALAPEAPPGLEAKG.

Belongs to the PPP1R37 family. Interacts with PPP1CA.

Inhibits phosphatase activity of protein phosphatase 1 (PP1) complexes. The polypeptide is Protein phosphatase 1 regulatory subunit 37 (Ppp1r37) (Rattus norvegicus (Rat)).